A 278-amino-acid polypeptide reads, in one-letter code: Large ribosomal subunit protein uL2 (278 aa).

Positions 225–278 are disordered; the sequence is MNPVDHPHGGGEGRTSGGRHPVTPWGKPTKGKKTRANKATDKYIVRSRHQKKKG. The segment covering 269-278 has biased composition (basic residues); sequence VRSRHQKKKG.

This sequence belongs to the universal ribosomal protein uL2 family. As to quaternary structure, part of the 50S ribosomal subunit. Forms a bridge to the 30S subunit in the 70S ribosome.

Functionally, one of the primary rRNA binding proteins. Required for association of the 30S and 50S subunits to form the 70S ribosome, for tRNA binding and peptide bond formation. It has been suggested to have peptidyltransferase activity; this is somewhat controversial. Makes several contacts with the 16S rRNA in the 70S ribosome. This is Large ribosomal subunit protein uL2 from Parvibaculum lavamentivorans (strain DS-1 / DSM 13023 / NCIMB 13966).